Here is a 410-residue protein sequence, read N- to C-terminus: S-adenosylmethionine synthase (410 aa).

Position 21 (H21) interacts with ATP. D23 contacts Mg(2+). E49 is a binding site for K(+). Residues E62 and Q105 each contribute to the L-methionine site. Residues 105-115 (QSQEIGAGVDQ) form a flexible loop region. Residues 107 to 133 (QEIGAGVDQSHEVRSGENTDADDQAGA) are disordered. ATP is bound by residues 180–182 (DGK), D261, 267–268 (RK), A284, and K288. An L-methionine-binding site is contributed by D261. K292 is an L-methionine binding site.

The protein belongs to the AdoMet synthase family. Homotetramer; dimer of dimers. The cofactor is Mg(2+). Requires K(+) as cofactor.

Its subcellular location is the cytoplasm. The catalysed reaction is L-methionine + ATP + H2O = S-adenosyl-L-methionine + phosphate + diphosphate. It functions in the pathway amino-acid biosynthesis; S-adenosyl-L-methionine biosynthesis; S-adenosyl-L-methionine from L-methionine: step 1/1. Catalyzes the formation of S-adenosylmethionine (AdoMet) from methionine and ATP. The overall synthetic reaction is composed of two sequential steps, AdoMet formation and the subsequent tripolyphosphate hydrolysis which occurs prior to release of AdoMet from the enzyme. The sequence is that of S-adenosylmethionine synthase from Corynebacterium diphtheriae (strain ATCC 700971 / NCTC 13129 / Biotype gravis).